We begin with the raw amino-acid sequence, 312 residues long: tRNA-cytidine(32) 2-sulfurtransferase (312 aa).

Residues 47 to 52 (SGGKDS) carry the PP-loop motif motif. [4Fe-4S] cluster is bound by residues Cys-122, Cys-125, and Cys-213.

Belongs to the TtcA family. In terms of assembly, homodimer. Mg(2+) serves as cofactor. [4Fe-4S] cluster is required as a cofactor.

It localises to the cytoplasm. The catalysed reaction is cytidine(32) in tRNA + S-sulfanyl-L-cysteinyl-[cysteine desulfurase] + AH2 + ATP = 2-thiocytidine(32) in tRNA + L-cysteinyl-[cysteine desulfurase] + A + AMP + diphosphate + H(+). It participates in tRNA modification. Catalyzes the ATP-dependent 2-thiolation of cytidine in position 32 of tRNA, to form 2-thiocytidine (s(2)C32). The sulfur atoms are provided by the cysteine/cysteine desulfurase (IscS) system. This is tRNA-cytidine(32) 2-sulfurtransferase from Actinobacillus succinogenes (strain ATCC 55618 / DSM 22257 / CCUG 43843 / 130Z).